The primary structure comprises 1438 residues: DNA polymerase III PolC-type (1438 aa).

Residues 422–578 (YVVFDVETTG…YDTEATAYMF (157 aa)) form the Exonuclease domain.

It belongs to the DNA polymerase type-C family. PolC subfamily.

The protein resides in the cytoplasm. The catalysed reaction is DNA(n) + a 2'-deoxyribonucleoside 5'-triphosphate = DNA(n+1) + diphosphate. Its function is as follows. Required for replicative DNA synthesis. This DNA polymerase also exhibits 3' to 5' exonuclease activity. The sequence is that of DNA polymerase III PolC-type from Staphylococcus saprophyticus subsp. saprophyticus (strain ATCC 15305 / DSM 20229 / NCIMB 8711 / NCTC 7292 / S-41).